We begin with the raw amino-acid sequence, 319 residues long: Probable metallo-hydrolase YqjP (319 aa).

7 residues coordinate Zn(2+): His-67, His-69, Asp-71, His-72, His-165, Asp-184, and His-231.

This sequence belongs to the metallo-beta-lactamase superfamily. Requires Zn(2+) as cofactor.

The protein is Probable metallo-hydrolase YqjP (yqjP) of Bacillus subtilis (strain 168).